The sequence spans 493 residues: Glutamyl-tRNA(Gln) amidotransferase subunit A (493 aa).

Catalysis depends on charge relay system residues Lys78 and Ser158. The Acyl-ester intermediate role is filled by Ser182.

Belongs to the amidase family. GatA subfamily. Heterotrimer of A, B and C subunits.

The catalysed reaction is L-glutamyl-tRNA(Gln) + L-glutamine + ATP + H2O = L-glutaminyl-tRNA(Gln) + L-glutamate + ADP + phosphate + H(+). Functionally, allows the formation of correctly charged Gln-tRNA(Gln) through the transamidation of misacylated Glu-tRNA(Gln) in organisms which lack glutaminyl-tRNA synthetase. The reaction takes place in the presence of glutamine and ATP through an activated gamma-phospho-Glu-tRNA(Gln). The sequence is that of Glutamyl-tRNA(Gln) amidotransferase subunit A from Methylocella silvestris (strain DSM 15510 / CIP 108128 / LMG 27833 / NCIMB 13906 / BL2).